A 133-amino-acid chain; its full sequence is Large-conductance mechanosensitive channel (133 aa).

Transmembrane regions (helical) follow at residues F10 to G30 and G76 to I96.

The protein belongs to the MscL family. Homopentamer.

It localises to the cell inner membrane. Channel that opens in response to stretch forces in the membrane lipid bilayer. May participate in the regulation of osmotic pressure changes within the cell. The polypeptide is Large-conductance mechanosensitive channel (Pasteurella multocida (strain Pm70)).